Consider the following 78-residue polypeptide: MGSLSIWHWIVVIGVVLLLFGRGKISDLMGDVAQGIKSFKKGLQDDEKTAEKPEPVKSIDHTAPPAAAPRTDVGSKVV.

Residues 1-21 (MGSLSIWHWIVVIGVVLLLFG) traverse the membrane as a helical segment. Residues 42 to 60 (GLQDDEKTAEKPEPVKSID) are compositionally biased toward basic and acidic residues. Positions 42 to 78 (GLQDDEKTAEKPEPVKSIDHTAPPAAAPRTDVGSKVV) are disordered.

The protein belongs to the TatA/E family. The Tat system comprises two distinct complexes: a TatABC complex, containing multiple copies of TatA, TatB and TatC subunits, and a separate TatA complex, containing only TatA subunits. Substrates initially bind to the TatABC complex, which probably triggers association of the separate TatA complex to form the active translocon.

The protein localises to the cell inner membrane. Functionally, part of the twin-arginine translocation (Tat) system that transports large folded proteins containing a characteristic twin-arginine motif in their signal peptide across membranes. TatA could form the protein-conducting channel of the Tat system. The sequence is that of Sec-independent protein translocase protein TatA from Rhodopseudomonas palustris (strain BisB18).